Reading from the N-terminus, the 354-residue chain is Uroporphyrinogen decarboxylase (354 aa).

Residues 27 to 31 (RQAGR), D77, Y154, T209, and H327 each bind substrate.

The protein belongs to the uroporphyrinogen decarboxylase family. As to quaternary structure, homodimer.

The protein resides in the cytoplasm. The catalysed reaction is uroporphyrinogen III + 4 H(+) = coproporphyrinogen III + 4 CO2. The protein operates within porphyrin-containing compound metabolism; protoporphyrin-IX biosynthesis; coproporphyrinogen-III from 5-aminolevulinate: step 4/4. Its function is as follows. Catalyzes the decarboxylation of four acetate groups of uroporphyrinogen-III to yield coproporphyrinogen-III. This is Uroporphyrinogen decarboxylase from Citrobacter koseri (strain ATCC BAA-895 / CDC 4225-83 / SGSC4696).